The sequence spans 339 residues: Uroporphyrinogen decarboxylase (339 aa).

Substrate-binding positions include 21–25 (RQAGR), D71, Y147, S202, and H315.

This sequence belongs to the uroporphyrinogen decarboxylase family. Homodimer.

The protein resides in the cytoplasm. It carries out the reaction uroporphyrinogen III + 4 H(+) = coproporphyrinogen III + 4 CO2. The protein operates within porphyrin-containing compound metabolism; protoporphyrin-IX biosynthesis; coproporphyrinogen-III from 5-aminolevulinate: step 4/4. Functionally, catalyzes the decarboxylation of four acetate groups of uroporphyrinogen-III to yield coproporphyrinogen-III. This Helicobacter pylori (strain HPAG1) protein is Uroporphyrinogen decarboxylase.